The chain runs to 455 residues: Golgi pH regulator (455 aa).

The next 5 helical transmembrane spans lie at 5–25 (IDSS…WLFF), 46–66 (VTFA…LGVL), 79–99 (LCVI…YFIV), 114–134 (CLLW…FPIL), and 150–170 (VGVI…VNCP). Asn-180 and Asn-243 each carry an N-linked (GlcNAc...) asparagine glycan. A run of 4 helical transmembrane segments spans residues 290–310 (GYFF…NIVL), 343–363 (ISFI…LITL), 378–398 (VIVL…VLLI), and 425–445 (WFDV…YLAH).

The protein belongs to the Golgi pH regulator (TC 1.A.38) family. Homotrimer. Interacts with RABL3; the interaction stabilizes GPR89B.

Its subcellular location is the golgi apparatus membrane. The enzyme catalyses iodide(out) = iodide(in). The catalysed reaction is chloride(in) = chloride(out). It catalyses the reaction bromide(in) = bromide(out). It carries out the reaction fluoride(in) = fluoride(out). Voltage-gated channel that enables the transfer of anions such as iodide, chloride, bromide and fluoride which may function in counter-ion conductance and participates in Golgi acidification. Plays a role in lymphocyte development, probably by acting as a RABL3 effector in hematopoietic cells. This chain is Golgi pH regulator, found in Cricetulus griseus (Chinese hamster).